A 151-amino-acid polypeptide reads, in one-letter code: RNA polymerase-binding transcription factor DksA (151 aa).

Residues Cys114, Cys117, Cys135, and Cys138 each coordinate Zn(2+). The dksA C4-type zinc finger occupies 114–138 (CNSCSVEIGIRRLEARPTADLCIDC).

This sequence belongs to the DksA family. Interacts directly with the RNA polymerase.

It localises to the cytoplasm. Functionally, transcription factor that acts by binding directly to the RNA polymerase (RNAP). Required for negative regulation of rRNA expression and positive regulation of several amino acid biosynthesis promoters. Also required for regulation of fis expression. This chain is RNA polymerase-binding transcription factor DksA, found in Buchnera aphidicola subsp. Acyrthosiphon pisum (strain APS) (Acyrthosiphon pisum symbiotic bacterium).